The chain runs to 482 residues: ATP synthase subunit beta (482 aa).

Position 162 to 169 (162 to 169) interacts with ATP; it reads GGAGVGKT.

Belongs to the ATPase alpha/beta chains family. As to quaternary structure, F-type ATPases have 2 components, CF(1) - the catalytic core - and CF(0) - the membrane proton channel. CF(1) has five subunits: alpha(3), beta(3), gamma(1), delta(1), epsilon(1). CF(0) has four main subunits: a(1), b(1), b'(1) and c(9-12).

It is found in the cellular thylakoid membrane. The catalysed reaction is ATP + H2O + 4 H(+)(in) = ADP + phosphate + 5 H(+)(out). In terms of biological role, produces ATP from ADP in the presence of a proton gradient across the membrane. The catalytic sites are hosted primarily by the beta subunits. The sequence is that of ATP synthase subunit beta from Nostoc punctiforme (strain ATCC 29133 / PCC 73102).